The primary structure comprises 610 residues: MSEIFDAKAFLKTVTSQPGVYRMYDAGGTVIYVGKAKDLKKRLSSYFRSNLASRKTEALVAQIQHIDVTVTHTETEALLLEHNYIKLYQPRYNVLLRDDKSYPFIFLSGDTHPRLAMHRGAKHAKGEYFGPFPNGYAVRETLALLQKIFPIRQCENSVYRNRSRPCLQYQIGRCLGPCVAGLVSEEEYAQQVEYVRLFLSGKDDQVLTQLIARMEKASQDLAFEEAARIRDQIQAVRRVTEKQFVSNAGDDLDVIGVAFDAGMACVHVLFIRQGKVLGSRSYFPKVPGGTELGEVVETFVGQFYLQGSQMRTLPGEILLDFNLSDKTLLADSLSELAGRRIHVQTKPRGDRARYLKLARTNAATALITKLSQQSTITQRLTALAAVLKLPAIKRMECFDISHTMGEQTVASCVVFDANGPLRAEYRRYNIAGITPGDDYAAMNQVLRRRYGKAIEESKIPDVILIDGGKGQLAQAKAVFAELDVPWDKHRPLLLGVAKGADRKAGLEILFFEPEGEGFSLPPDSPALHVIQHIRDESHDHAIGGHRKKRAKVKNTSTLETIEGVGPKRRQMLLKYMGGLQGLRNASVEEIAKVPGISQGLAEKIFWSLKH.

Positions 16–94 constitute a GIY-YIG domain; it reads SQPGVYRMYD…IKLYQPRYNV (79 aa). In terms of domain architecture, UVR spans 204 to 239; the sequence is DQVLTQLIARMEKASQDLAFEEAARIRDQIQAVRRV.

It belongs to the UvrC family. Interacts with UvrB in an incision complex.

Its subcellular location is the cytoplasm. The UvrABC repair system catalyzes the recognition and processing of DNA lesions. UvrC both incises the 5' and 3' sides of the lesion. The N-terminal half is responsible for the 3' incision and the C-terminal half is responsible for the 5' incision. This chain is UvrABC system protein C, found in Salmonella enteritidis PT4 (strain P125109).